The primary structure comprises 82 residues: Probable 26S proteasome complex subunit dss-1 (82 aa).

Residues 56 to 82 (NWDDETHESEFSKQLKEELRKSGHQVA) form a disordered region. Over residues 63–76 (ESEFSKQLKEELRK) the composition is skewed to basic and acidic residues.

It belongs to the DSS1/SEM1 family. In terms of assembly, part of the 26S proteasome. In terms of tissue distribution, expressed in intestinal epithelium and head neurons.

The protein resides in the nucleus. It is found in the cytoplasm. Its function is as follows. Subunit of the 26S proteasome which plays a role in ubiquitin-dependent proteolysis. Has an essential role in oogenesis and larval growth. Required for intestinal function and default lifespan. The sequence is that of Probable 26S proteasome complex subunit dss-1 (dss-1) from Caenorhabditis elegans.